Here is a 556-residue protein sequence, read N- to C-terminus: Oxygen-dependent choline dehydrogenase (556 aa).

FAD is bound at residue 6–35 (DYIIIGAGSAGNVLAARLTEDPGVTVLLLE). H475 acts as the Proton acceptor in catalysis.

This sequence belongs to the GMC oxidoreductase family. It depends on FAD as a cofactor.

It carries out the reaction choline + A = betaine aldehyde + AH2. The enzyme catalyses betaine aldehyde + NAD(+) + H2O = glycine betaine + NADH + 2 H(+). It participates in amine and polyamine biosynthesis; betaine biosynthesis via choline pathway; betaine aldehyde from choline (cytochrome c reductase route): step 1/1. In terms of biological role, involved in the biosynthesis of the osmoprotectant glycine betaine. Catalyzes the oxidation of choline to betaine aldehyde and betaine aldehyde to glycine betaine at the same rate. In Xanthomonas axonopodis pv. citri (strain 306), this protein is Oxygen-dependent choline dehydrogenase.